Reading from the N-terminus, the 75-residue chain is uncharacterized protein (75 aa).

A run of 2 helical transmembrane segments spans residues 5-25 (VIIC…IFEI) and 42-62 (VAIF…GSVL).

It localises to the membrane. This is an uncharacterized protein from Saccharomyces cerevisiae (strain ATCC 204508 / S288c) (Baker's yeast).